The sequence spans 327 residues: Probable cell division protein WhiA (327 aa).

A DNA-binding region (H-T-H motif) is located at residues 275 to 308 (SLEELGRLADPPMTKDAVAGRIRRLLSMADRKAK).

It belongs to the WhiA family.

Functionally, involved in cell division and chromosome segregation. In Mycobacterium bovis (strain ATCC BAA-935 / AF2122/97), this protein is Probable cell division protein WhiA.